The sequence spans 276 residues: Diaminopimelate epimerase (276 aa).

N13, Q46, and N66 together coordinate substrate. C75 acts as the Proton donor in catalysis. Residues 76-77 (GN), N159, N192, and 210-211 (ER) contribute to the substrate site. C219 (proton acceptor) is an active-site residue. 220 to 221 (GT) is a substrate binding site.

It belongs to the diaminopimelate epimerase family. As to quaternary structure, homodimer.

It is found in the cytoplasm. It catalyses the reaction (2S,6S)-2,6-diaminopimelate = meso-2,6-diaminopimelate. The protein operates within amino-acid biosynthesis; L-lysine biosynthesis via DAP pathway; DL-2,6-diaminopimelate from LL-2,6-diaminopimelate: step 1/1. Catalyzes the stereoinversion of LL-2,6-diaminopimelate (L,L-DAP) to meso-diaminopimelate (meso-DAP), a precursor of L-lysine and an essential component of the bacterial peptidoglycan. This Stutzerimonas stutzeri (strain A1501) (Pseudomonas stutzeri) protein is Diaminopimelate epimerase.